A 389-amino-acid chain; its full sequence is E3 ubiquitin-protein ligase E3D (389 aa).

The residue at position 2 (Ala-2) is an N-acetylalanine. The BRAT1-like motif motif lies at Pro-129–Asn-159. Cys-144 is a Zn(2+) binding site. Residues Leu-235 to Cys-257 form an interaction with UBE2C region. The HECT-like stretch occupies residues Leu-353–Met-389.

In terms of assembly, interacts with UBE2C/UbcH10 (E2 ubiquitin-conjugating enzyme). In vitro, interacts with cyclin-B. In terms of processing, ubiquitinated by UBCH10 (E2 ubiquitin-conjugating enzyme).

Its subcellular location is the cytoplasm. It carries out the reaction S-ubiquitinyl-[E2 ubiquitin-conjugating enzyme]-L-cysteine + [acceptor protein]-L-lysine = [E2 ubiquitin-conjugating enzyme]-L-cysteine + N(6)-ubiquitinyl-[acceptor protein]-L-lysine.. Its pathway is protein modification; protein ubiquitination. In terms of biological role, E3 ubiquitin-protein ligase which accepts ubiquitin from specific E2 ubiquitin-conjugating enzymes, and transfers it to substrates, generally promoting their degradation by the proteasome. Independently of its E3 ubiquitin-protein ligase activity, acts as an inhibitor of CPSF3 endonuclease activity by blocking CPSF3 active site. The sequence is that of E3 ubiquitin-protein ligase E3D (UBE3D) from Bos taurus (Bovine).